The sequence spans 859 residues: Probable potassium transporter 14 (859 aa).

Positions 1 to 19 (METRSGGSGSASGGGGGGR) are enriched in gly residues. The segment at 1–69 (METRSGGSGS…SRGGCSDSDD (69 aa)) is disordered. At 1–112 (METRSGGSGS…RHQEITVGRS (112 aa)) the chain is on the cytoplasmic side. The segment covering 54-65 (PAAASGSRGGCS) has biased composition (low complexity). The chain crosses the membrane as a helical span at residues 113–133 (IVLAVQTLGVVFGDVGTSPLY). Residues 134–155 (AFDVMFNKYPITSKEDVLGALS) lie on the Extracellular side of the membrane. Residues 156 to 176 (LVIYTLILIPLLKYTLIALWG) form a helical membrane-spanning segment. Residues 177-240 (NDDGEGGTFA…RLETSSMLKK (64 aa)) are Cytoplasmic-facing. A helical membrane pass occupies residues 241-261 (LLLMLVLFGTSMVIADGVVTP). The Extracellular segment spans residues 262–275 (AMSVMSAVNGLKVG). The chain crosses the membrane as a helical span at residues 276-296 (ISSVNEGEVVMITVAVLIVLF). Residues 297-305 (TLQRFGSSK) are Cytoplasmic-facing. The helical transmembrane segment at 306–326 (VALAVGPALFIWFCCLAGIGI) threads the bilayer. Over 327–359 (YNMKTYGSAVLQAFNPMYIYYYFERNPTQAWMS) the chain is Extracellular. A helical transmembrane segment spans residues 360 to 380 (LGGCLLCATGSEAMFADLCYF). Residues 381–388 (SVKSVQLT) lie on the Cytoplasmic side of the membrane. A helical membrane pass occupies residues 389–409 (FVFLVLPCLLLGYLGQAAFLM). Residues 410-417 (ENLTENQQ) are Extracellular-facing. N411 carries an N-linked (GlcNAc...) asparagine glycan. Residues 418–438 (VFFLSIPNQAFWPVVFIAILA) traverse the membrane as a helical segment. Topologically, residues 439–478 (AIIASRTMTTAIFSTIKQATALGCFPRLKIIHTSRSFMGQ) are cytoplasmic. The helical transmembrane segment at 479 to 499 (IYIPMMNWFLLVSCLAFVTMF) threads the bilayer. At 500 to 508 (GSINEIGNA) the chain is on the extracellular side. Residues 509 to 531 (YGIAELGVMMMTTVLVTIIMLLI) traverse the membrane as a helical segment. The Cytoplasmic portion of the chain corresponds to 532-535 (WQIN). Residues 536–558 (IIVVLCFLTLSLGLELIFFSSVL) form a helical membrane-spanning segment. The Extracellular portion of the chain corresponds to 559-560 (GS). A helical membrane pass occupies residues 561 to 581 (VADGSWVLLVFAAVLYLIMYI). Over 582–859 (WNYGTKLKYE…MMQVAMQYMV (278 aa)) the chain is Cytoplasmic. Positions 752-772 (GVPPAEAAGTTEHPTIGSSMS) are disordered. Positions 763-772 (EHPTIGSSMS) are enriched in polar residues.

This sequence belongs to the HAK/KUP transporter (TC 2.A.72.3) family.

The protein resides in the membrane. In terms of biological role, high-affinity potassium transporter. The chain is Probable potassium transporter 14 (HAK14) from Oryza sativa subsp. japonica (Rice).